An 85-amino-acid chain; its full sequence is Glutaredoxin (85 aa).

In terms of domain architecture, Glutaredoxin spans 1 to 85 (MQTVTMYTGP…EGGLDGLLNP (85 aa)). An intrachain disulfide couples Cys-12 to Cys-15.

It belongs to the glutaredoxin family. Monomer.

The protein localises to the cytoplasm. Functionally, has a glutathione-disulfide oxidoreductase activity in the presence of NADPH and glutathione reductase. Reduces low molecular weight disulfides and proteins. This is Glutaredoxin (grx) from Neisseria meningitidis serogroup B (strain ATCC BAA-335 / MC58).